The following is a 497-amino-acid chain: Protein root UVB sensitive 6 (497 aa).

This sequence belongs to the RUS1 family.

Functionally, required for normal embryo development. In Arabidopsis thaliana (Mouse-ear cress), this protein is Protein root UVB sensitive 6.